Consider the following 603-residue polypeptide: D-3-phosphoglycerate dehydrogenase 1, chloroplastic (603 aa).

A chloroplast-targeting transit peptide spans 1–54 (MSATAAASSSIAVATNSLRNVTLSSRSPLPSAISVAFPSRGRNTLQRRLVLVSC). NAD(+) is bound by residues 210–211 (KV), Asp230, 289–291 (VAR), and Asp315. Arg291 is an active-site residue. The active site involves Glu320. The active-site Proton donor is His339. 339-342 (HLGA) lines the NAD(+) pocket. The region spanning 531–603 (IILCRQVDQP…AVEEFVFLKL (73 aa)) is the ACT domain.

Belongs to the D-isomer specific 2-hydroxyacid dehydrogenase family. Ubiquitous, but highly expressed in roots. Expressed in vasculature, root and shoot meristems, distal part of cotyledons and leaves, anther, stigma and pollen grains. Detected at the tip of the cotyledons in late embryos.

The protein resides in the plastid. The protein localises to the chloroplast. It catalyses the reaction (2R)-3-phosphoglycerate + NAD(+) = 3-phosphooxypyruvate + NADH + H(+). It participates in amino-acid biosynthesis; L-serine biosynthesis; L-serine from 3-phospho-D-glycerate: step 1/3. Its activity is regulated as follows. Partially inhibited by 5 mM serine. Its function is as follows. Involved in the plastidial phosphorylated pathway of serine biosynthesis (PPSB). Required for mature pollen development. The protein is D-3-phosphoglycerate dehydrogenase 1, chloroplastic (PGDH1) of Arabidopsis thaliana (Mouse-ear cress).